The chain runs to 187 residues: Threonylcarbamoyl-AMP synthase (187 aa).

In terms of domain architecture, YrdC-like spans 4–187 (QSTIAAAITC…DAMNGKVFRG (184 aa)).

This sequence belongs to the SUA5 family. TsaC subfamily.

The protein resides in the cytoplasm. It carries out the reaction L-threonine + hydrogencarbonate + ATP = L-threonylcarbamoyladenylate + diphosphate + H2O. Required for the formation of a threonylcarbamoyl group on adenosine at position 37 (t(6)A37) in tRNAs that read codons beginning with adenine. Catalyzes the conversion of L-threonine, HCO(3)(-)/CO(2) and ATP to give threonylcarbamoyl-AMP (TC-AMP) as the acyladenylate intermediate, with the release of diphosphate. This Pseudoalteromonas translucida (strain TAC 125) protein is Threonylcarbamoyl-AMP synthase.